The primary structure comprises 273 residues: Thiazole synthase (273 aa).

Residue K110 is the Schiff-base intermediate with DXP of the active site. 1-deoxy-D-xylulose 5-phosphate is bound by residues G171, 197 to 198, and 219 to 220; these read AG and NT. A disordered region spans residues 251-273; that stretch reads MAAQDSAQPSTPVLGTPFWHHAP.

It belongs to the ThiG family. As to quaternary structure, homotetramer. Forms heterodimers with either ThiH or ThiS.

The protein localises to the cytoplasm. The enzyme catalyses [ThiS sulfur-carrier protein]-C-terminal-Gly-aminoethanethioate + 2-iminoacetate + 1-deoxy-D-xylulose 5-phosphate = [ThiS sulfur-carrier protein]-C-terminal Gly-Gly + 2-[(2R,5Z)-2-carboxy-4-methylthiazol-5(2H)-ylidene]ethyl phosphate + 2 H2O + H(+). It functions in the pathway cofactor biosynthesis; thiamine diphosphate biosynthesis. Its function is as follows. Catalyzes the rearrangement of 1-deoxy-D-xylulose 5-phosphate (DXP) to produce the thiazole phosphate moiety of thiamine. Sulfur is provided by the thiocarboxylate moiety of the carrier protein ThiS. In vitro, sulfur can be provided by H(2)S. The protein is Thiazole synthase of Variovorax paradoxus (strain S110).